A 64-amino-acid polypeptide reads, in one-letter code: Large ribosomal subunit protein uL30 (64 aa).

Belongs to the universal ribosomal protein uL30 family. As to quaternary structure, part of the 50S ribosomal subunit.

The polypeptide is Large ribosomal subunit protein uL30 (Rhodopseudomonas palustris (strain HaA2)).